A 726-amino-acid polypeptide reads, in one-letter code: A-type inclusion protein A25 homolog (726 aa).

The tract at residues 342-361 is disordered; the sequence is TNTGIEEPHATGGDKEDQPI. A compositionally biased stretch (basic and acidic residues) spans 347–360; that stretch reads EEPHATGGDKEDQP. The tract at residues 426–713 is 4 X approximate tandem repeats; sequence TELEEAKRKL…ERQLNDCRRN (288 aa). Repeat copies occupy residues 612–634, 639–661, 667–689, and 691–713.

It belongs to the poxviridae A25 protein family. Interacts (via N-terminus) with protein A26.

The protein localises to the virion. Functionally, structural protein that forms a matrix surrounding the mature virion (MV) through interaction with protein A26. Presence of protein A25 in the virion structurally prevents direct virus-cell fusion mechanism. This chain is A-type inclusion protein A25 homolog, found in Camelus.